Here is a 215-residue protein sequence, read N- to C-terminus: Elongation factor Ts (215 aa).

Residues 80–83 (TDFV) form an involved in Mg(2+) ion dislocation from EF-Tu region.

The protein belongs to the EF-Ts family.

It is found in the cytoplasm. Its function is as follows. Associates with the EF-Tu.GDP complex and induces the exchange of GDP to GTP. It remains bound to the aminoacyl-tRNA.EF-Tu.GTP complex up to the GTP hydrolysis stage on the ribosome. The sequence is that of Elongation factor Ts from Alkaliphilus metalliredigens (strain QYMF).